The sequence spans 652 residues: UvrABC system protein C (652 aa).

Residues 20–99 (PEPGCYLMRD…IKNHQPHFNV (80 aa)) enclose the GIY-YIG domain. One can recognise a UVR domain in the interval 209 to 244 (DELQRLLDEQMNRYAERLDFESAARVRDQLQGLDQL).

This sequence belongs to the UvrC family. In terms of assembly, interacts with UvrB in an incision complex.

It localises to the cytoplasm. Its function is as follows. The UvrABC repair system catalyzes the recognition and processing of DNA lesions. UvrC both incises the 5' and 3' sides of the lesion. The N-terminal half is responsible for the 3' incision and the C-terminal half is responsible for the 5' incision. This chain is UvrABC system protein C, found in Parasynechococcus marenigrum (strain WH8102).